The sequence spans 283 residues: Large ribosomal subunit protein mL46 (283 aa).

Lys217 is subject to N6-succinyllysine. An N6-acetyllysine modification is found at Lys228. Lys246 is subject to N6-succinyllysine.

This sequence belongs to the mitochondrion-specific ribosomal protein mL46 family. Component of the mitochondrial ribosome large subunit (39S) which comprises a 16S rRNA and about 50 distinct proteins.

It localises to the mitochondrion. The chain is Large ribosomal subunit protein mL46 (Mrpl46) from Mus musculus (Mouse).